The primary structure comprises 312 residues: GATA transcription factor 6 (312 aa).

Disordered stretches follow at residues 1-33 (MESV…VDDL), 56-77 (QRKR…STAD), and 136-186 (KSQH…PLWL). Positions 56-71 (QRKRGVSDENTLHRSN) are enriched in basic and acidic residues. Basic residues predominate over residues 142-151 (VKTRPKRART). The Nuclear localization signal motif lies at 143–150 (KTRPKRAR). The segment covering 157–186 (SHGSQSLTDSSSSSTTSSSSSPRPSSPLWL) has biased composition (low complexity). The GATA-type zinc finger occupies 217–271 (QTQTRQCGHCGVQKTPQWRAGPLGAKTLCNACGVRYKSGRLLPEYRPACSPTFSS).

The protein belongs to the type IV zinc-finger family. Class A subfamily.

The protein resides in the nucleus. In terms of biological role, transcriptional activator that specifically binds 5'-GATA-3' or 5'-GAT-3' motifs within gene promoters. May be involved in the regulation of some light-responsive genes. This is GATA transcription factor 6 (GATA6) from Arabidopsis thaliana (Mouse-ear cress).